The primary structure comprises 186 residues: MMELQGKFLIAMPHLDDYFNRTVVFMCEHNEQGSMGLVINQPTDLSIAELYSKLNFMMKNDRTFGNEMVVAGGPMHTERGFILHKNTLNAFQHTYKVTKELSMTTSADVVETLGSTFAPEKYLVALGCSSWGAGQLEKEIRDNAWLVVSSNDQILFDMPYEDRYAAANQLLGIHPYNFALAQVGHS.

Belongs to the UPF0301 (AlgH) family.

This chain is UPF0301 protein HI_0304, found in Haemophilus influenzae (strain ATCC 51907 / DSM 11121 / KW20 / Rd).